A 520-amino-acid polypeptide reads, in one-letter code: tRNA (guanine-N(7)-)-methyltransferase non-catalytic subunit TRM82 (520 aa).

A disordered region spans residues 51–102 (PLDSEISPDRASSAGTCAEPPEKRRKLTPPVDESGEAQTEQSAKAKARKSQT). 3 WD repeats span residues 105–145 (QAWS…KLTQ), 244–291 (GHVS…HIIH), and 296–338 (GHTS…QTIP).

Belongs to the WD repeat TRM82 family. As to quaternary structure, forms a heterodimer with the catalytic subunit TRM8.

The protein resides in the nucleus. The protein operates within tRNA modification; N(7)-methylguanine-tRNA biosynthesis. Functionally, required for the formation of N(7)-methylguanine at position 46 (m7G46) in tRNA. In the complex, it is required to stabilize and induce conformational changes of the catalytic subunit. This is tRNA (guanine-N(7)-)-methyltransferase non-catalytic subunit TRM82 from Coccidioides immitis (strain RS) (Valley fever fungus).